Here is a 123-residue protein sequence, read N- to C-terminus: Small ribosomal subunit protein uS12cz/uS12cy (123 aa).

The protein belongs to the universal ribosomal protein uS12 family. Part of the 30S ribosomal subunit.

The protein resides in the plastid. Its subcellular location is the chloroplast. Functionally, with S4 and S5 plays an important role in translational accuracy. Located at the interface of the 30S and 50S subunits. The protein is Small ribosomal subunit protein uS12cz/uS12cy (rps12-A) of Drimys granadensis.